The following is a 731-amino-acid chain: Gelsolin (731 aa).

The tract at residues 2–125 is actin-severing; that stretch reads VVEHPEFLKA…YKKGGVASGF (124 aa). Residues 25-107 form a Gelsolin-like 1 repeat; the sequence is FDLVPVPPNL…VQGFESATFL (83 aa). A Phosphotyrosine modification is found at Y35. 6 residues coordinate Ca(2+): G41, D42, E73, D85, G90, and A92. Residues 72-75 are actin-actin interfilament contact point; the sequence is DESG. An a 1,2-diacyl-sn-glycero-3-phospho-(1D-myo-inositol-4,5-bisphosphate)-binding site is contributed by 111-118; sequence KSGLKYKK. Residue V121 coordinates Ca(2+). 137–145 provides a ligand contact to a 1,2-diacyl-sn-glycero-3-phospho-(1D-myo-inositol-4,5-bisphosphate); sequence RLLQVKGRR. The stretch at 147-219 is one Gelsolin-like 2 repeat; that stretch reads VRATEVPVSW…FEEGAEPEAM (73 aa). Residues G162 and D163 each coordinate Ca(2+). Cysteines 164 and 177 form a disulfide. 5 residues coordinate Ca(2+): E185, D235, E278, D279, and E303. The Gelsolin-like 3 repeat unit spans residues 266–338; the sequence is DENPFAQGAL…LPEGGETPLF (73 aa). Residues Y358 and Y414 each carry the phosphotyrosine modification. Residues 383 to 731 are actin-binding, Ca-sensitive; sequence AAQHGMDDDG…LDRALAELAA (349 aa). Residues 404-485 form a Gelsolin-like 4 repeat; the sequence is SNKVPVDPAT…VQGKEPAHLM (82 aa). 7 residues coordinate Ca(2+): G420, D421, E451, D463, G468, P470, and T500. Position 533 is an N6-acetyllysine (K533). Residues 533–591 form a Gelsolin-like 5 repeat; the sequence is KAGALNSNDAFVLKTPSAAYLWVGAGASEAEKTGAQELLRVLRAQPVQVAEGSEPDSFW. The Ca(2+) site is built by N540 and D541. Y552 is subject to Phosphotyrosine. Residue E563 coordinates Ca(2+). Residue Y600 is modified to Phosphotyrosine. One copy of the Gelsolin-like 6 repeat lies at 630–705; the sequence is IEEVPGEFMQ…VKQGFEPPSF (76 aa). Ca(2+) is bound by residues D645, D646, and E668. Phosphothreonine is present on T691.

The protein belongs to the villin/gelsolin family. Binds to actin and to fibronectin. Identified in a complex composed of ACTA1, COBL, GSN and TMSB4X. Interacts with the inactive form of EIF2AK2/PKR. Interacts with FLII.

It localises to the cytoplasm. The protein localises to the cytoskeleton. Functionally, calcium-regulated, actin-modulating protein that binds to the plus (or barbed) ends of actin monomers or filaments, preventing monomer exchange (end-blocking or capping). It can promote the assembly of monomers into filaments (nucleation) as well as sever filaments already formed. Plays a role in ciliogenesis. This chain is Gelsolin (GSN), found in Equus caballus (Horse).